Consider the following 373-residue polypeptide: tRNA-specific 2-thiouridylase MnmA (373 aa).

Residues 12 to 19 (GMSGGVDS) and methionine 38 contribute to the ATP site. Residues 98-100 (NPD) are interaction with target base in tRNA. The active-site Nucleophile is the cysteine 103. Cysteines 103 and 200 form a disulfide. Glycine 127 contributes to the ATP binding site. The interval 150–152 (KDQ) is interaction with tRNA. Residue cysteine 200 is the Cysteine persulfide intermediate of the active site. The interaction with tRNA stretch occupies residues 312–313 (RY).

The protein belongs to the MnmA/TRMU family.

Its subcellular location is the cytoplasm. It catalyses the reaction S-sulfanyl-L-cysteinyl-[protein] + uridine(34) in tRNA + AH2 + ATP = 2-thiouridine(34) in tRNA + L-cysteinyl-[protein] + A + AMP + diphosphate + H(+). Its function is as follows. Catalyzes the 2-thiolation of uridine at the wobble position (U34) of tRNA, leading to the formation of s(2)U34. The sequence is that of tRNA-specific 2-thiouridylase MnmA from Streptococcus pneumoniae (strain Hungary19A-6).